The primary structure comprises 222 residues: MVRGERMLCPAWLLALAVLCAAGSEVRAQCMEDARCRDLTTDENILDCIQLCRSDLTDETPVYPGESHLQPPSELEQTEVLVPLSPAALAPAEQMDPESSPQHEHKRSYSMEHFRWGKPVGRKRRPIKVYTNGVEEESTETLPAEMRRELATNEIDYPQEEGALNQQDKKDGSYKMSHFRWSSPPASKRYGGFMKSWDERSQKPLLTLFKNVINKEHQKKDQ.

Residues 1–28 (MVRGERMLCPAWLLALAVLCAAGSEVRA) form the signal peptide. A propeptide spanning residues 29–105 (QCMEDARCRD…DPESSPQHEH (77 aa)) is cleaved from the precursor.

This sequence belongs to the POMC family. Specific enzymatic cleavages at paired basic residues yield the different active peptides.

It localises to the secreted. Its function is as follows. Stimulates the adrenal glands to release cortisol. Functionally, anorexigenic peptide. Increases the pigmentation of skin by increasing melanin production in melanocytes. Increases the pigmentation of skin by increasing melanin production in melanocytes. In terms of biological role, endogenous orexigenic opiate. Its function is as follows. Endogenous opiate. In Cyprinus carpio (Common carp), this protein is Pro-opiomelanocortin-1 (pomca).